We begin with the raw amino-acid sequence, 111 residues long: Large ribosomal subunit protein uL22 (111 aa).

This sequence belongs to the universal ribosomal protein uL22 family. As to quaternary structure, part of the 50S ribosomal subunit.

In terms of biological role, this protein binds specifically to 23S rRNA; its binding is stimulated by other ribosomal proteins, e.g. L4, L17, and L20. It is important during the early stages of 50S assembly. It makes multiple contacts with different domains of the 23S rRNA in the assembled 50S subunit and ribosome. The globular domain of the protein is located near the polypeptide exit tunnel on the outside of the subunit, while an extended beta-hairpin is found that lines the wall of the exit tunnel in the center of the 70S ribosome. The polypeptide is Large ribosomal subunit protein uL22 (Geotalea daltonii (strain DSM 22248 / JCM 15807 / FRC-32) (Geobacter daltonii)).